We begin with the raw amino-acid sequence, 662 residues long: Mitochondrial Rho GTPase 1 (662 aa).

Topologically, residues 1–634 (MTKETIRVVI…AKDVDYRQTA (634 aa)) are cytoplasmic. The Miro 1 domain occupies 3–185 (KETIRVVICG…FYLCQRAITH (183 aa)). GTP-binding positions include 12 to 19 (GDEGVGKS), 62 to 64 (DTS), and 116 to 119 (NKCD). EF-hand domains lie at 201–236 (LAVM…CFNK) and 330–365 (KGYR…TPGL). Asp-214, Asn-216, Asp-218, Tyr-220, Glu-225, Asp-343, Asp-345, Asp-347, and Glu-354 together coordinate Ca(2+). The Miro 2 domain occupies 446–611 (RKVFNCFVIG…FIKITEAALD (166 aa)). GTP contacts are provided by residues 455–462 (GKPCCGKS), 491–495 (ELKGG), and 560–563 (SKAD). A helical; Anchor for type IV membrane protein transmembrane segment spans residues 635–655 (LIFGSTVGFVALCSFTLMKLF). The Mitochondrial intermembrane segment spans residues 656-662 (KSSKFSK).

The protein belongs to the mitochondrial Rho GTPase family.

It localises to the mitochondrion outer membrane. Functionally, mitochondrial GTPase involved in mitochondrial trafficking. Probably involved in control of anterograde transport of mitochondria and their subcellular distribution. The chain is Mitochondrial Rho GTPase 1 (GEM1) from Saccharomyces cerevisiae (strain ATCC 204508 / S288c) (Baker's yeast).